The following is a 208-amino-acid chain: Proteasome subunit beta 2 (208 aa).

Positions 1–14 are cleaved as a propeptide — removed in mature form; by autocatalysis; it reads MGNELQLENKILKG. Catalysis depends on threonine 15, which acts as the Nucleophile.

Belongs to the peptidase T1B family. In terms of assembly, the 20S proteasome core is composed of 14 alpha and 14 beta subunits that assemble into four stacked heptameric rings, resulting in a barrel-shaped structure. The two inner rings, each composed of seven catalytic beta subunits, are sandwiched by two outer rings, each composed of seven alpha subunits. The catalytic chamber with the active sites is on the inside of the barrel. Has a gated structure, the ends of the cylinder being occluded by the N-termini of the alpha-subunits. Is capped at one or both ends by the proteasome regulatory ATPase, PAN.

It localises to the cytoplasm. The enzyme catalyses Cleavage of peptide bonds with very broad specificity.. Its activity is regulated as follows. The formation of the proteasomal ATPase PAN-20S proteasome complex, via the docking of the C-termini of PAN into the intersubunit pockets in the alpha-rings, triggers opening of the gate for substrate entry. Interconversion between the open-gate and close-gate conformations leads to a dynamic regulation of the 20S proteasome proteolysis activity. Component of the proteasome core, a large protease complex with broad specificity involved in protein degradation. In Saccharolobus solfataricus (strain ATCC 35092 / DSM 1617 / JCM 11322 / P2) (Sulfolobus solfataricus), this protein is Proteasome subunit beta 2.